A 557-amino-acid chain; its full sequence is Chaperonin GroEL 1 (557 aa).

ATP is bound by residues 29 to 32 (TLGP), Lys-50, 86 to 90 (DGTTT), Gly-416, and Asp-495.

It belongs to the chaperonin (HSP60) family. In terms of assembly, forms a cylinder of 14 subunits composed of two heptameric rings stacked back-to-back. Interacts with the co-chaperonin GroES.

The protein resides in the cytoplasm. The enzyme catalyses ATP + H2O + a folded polypeptide = ADP + phosphate + an unfolded polypeptide.. In terms of biological role, together with its co-chaperonin GroES, plays an essential role in assisting protein folding. The GroEL-GroES system forms a nano-cage that allows encapsulation of the non-native substrate proteins and provides a physical environment optimized to promote and accelerate protein folding. This is Chaperonin GroEL 1 from Protochlamydia amoebophila (strain UWE25).